Here is a 248-residue protein sequence, read N- to C-terminus: Large ribosomal subunit protein uL4 (248 aa).

2 disordered regions span residues 48–95 (GTHK…GPVP) and 210–248 (AFSE…RTGA). Over residues 233–248 (DATKARSSRHDDRTGA) the composition is skewed to basic and acidic residues.

Belongs to the universal ribosomal protein uL4 family. As to quaternary structure, part of the 50S ribosomal subunit.

One of the primary rRNA binding proteins, this protein initially binds near the 5'-end of the 23S rRNA. It is important during the early stages of 50S assembly. It makes multiple contacts with different domains of the 23S rRNA in the assembled 50S subunit and ribosome. Functionally, forms part of the polypeptide exit tunnel. The sequence is that of Large ribosomal subunit protein uL4 from Tropheryma whipplei (strain TW08/27) (Whipple's bacillus).